A 234-amino-acid polypeptide reads, in one-letter code: Orotate phosphoribosyltransferase (234 aa).

Residue K37 participates in 5-phospho-alpha-D-ribose 1-diphosphate binding. 45 to 46 (FF) contributes to the orotate binding site. 5-phospho-alpha-D-ribose 1-diphosphate is bound by residues 83-84 (YK), R109, K110, K113, H115, and 134-142 (DDVISAGTS). 2 residues coordinate orotate: S138 and R166.

It belongs to the purine/pyrimidine phosphoribosyltransferase family. PyrE subfamily. Homodimer. The cofactor is Mg(2+).

The enzyme catalyses orotidine 5'-phosphate + diphosphate = orotate + 5-phospho-alpha-D-ribose 1-diphosphate. It participates in pyrimidine metabolism; UMP biosynthesis via de novo pathway; UMP from orotate: step 1/2. In terms of biological role, catalyzes the transfer of a ribosyl phosphate group from 5-phosphoribose 1-diphosphate to orotate, leading to the formation of orotidine monophosphate (OMP). The polypeptide is Orotate phosphoribosyltransferase (Methylibium petroleiphilum (strain ATCC BAA-1232 / LMG 22953 / PM1)).